A 103-amino-acid chain; its full sequence is Histone H4 (103 aa).

Positions 1–14 (MSGRGKGGKGLGKG) are enriched in gly residues. The interval 1–20 (MSGRGKGGKGLGKGGAKRHR) is disordered. N6-(2-hydroxyisobutyryl)lysine; alternate is present on residues lysine 6, lysine 9, lysine 13, lysine 17, lysine 32, and lysine 45. N6-acetyl-N6-methyllysine; alternate is present on lysine 6. An N6-butyryllysine; alternate mark is found at lysine 6, lysine 9, lysine 13, lysine 17, lysine 32, and lysine 45. The residue at position 6 (lysine 6) is an N6-glutaryllysine; alternate. Lysine 9 bears the N6-propionyllysine; alternate mark. At lysine 13 the chain carries N6-acetyl-N6-methyllysine; alternate. Lysine 13 bears the N6-glutaryllysine; alternate mark. N6-propionyllysine; alternate is present on residues lysine 17, lysine 32, and lysine 45. Residues 17–21 (KRHRK) mediate DNA binding. Position 32 is an N6-glutaryllysine; alternate (lysine 32). N6-succinyllysine; alternate is present on lysine 32. Residues lysine 60, lysine 78, lysine 80, and lysine 92 each carry the N6-glutaryllysine; alternate modification. Lysine 60 is subject to N6-(2-hydroxyisobutyryl)lysine. N6-(2-hydroxyisobutyryl)lysine; alternate is present on residues lysine 78, lysine 80, and lysine 92. 3 positions are modified to N6-butyryllysine; alternate: lysine 78, lysine 80, and lysine 92. N6-propionyllysine; alternate occurs at positions 78, 80, and 92. An N6-succinyllysine modification is found at lysine 78. N6-succinyllysine; alternate is present on lysine 92.

It belongs to the histone H4 family. In terms of assembly, the nucleosome is a histone octamer containing two molecules each of H2A, H2B, H3 and H4 assembled in one H3-H4 heterotetramer and two H2A-H2B heterodimers. The octamer wraps approximately 147 bp of DNA. In terms of processing, butyrylation of histones marks active promoters and competes with histone acetylation. Glutarylation at Lys-92 (H4K91glu) destabilizes nucleosomes by promoting dissociation of the H2A-H2B dimers from nucleosomes.

The protein resides in the nucleus. It is found in the chromosome. In terms of biological role, core component of nucleosome. Nucleosomes wrap and compact DNA into chromatin, limiting DNA accessibility to the cellular machineries which require DNA as a template. Histones thereby play a central role in transcription regulation, DNA repair, DNA replication and chromosomal stability. DNA accessibility is regulated via a complex set of post-translational modifications of histones, also called histone code, and nucleosome remodeling. This chain is Histone H4 (H4.1), found in Oikopleura dioica (Tunicate).